Here is a 202-residue protein sequence, read N- to C-terminus: GTP cyclohydrolase 1 (202 aa).

Zn(2+) is bound by residues cysteine 90, histidine 93, and cysteine 163.

It belongs to the GTP cyclohydrolase I family. Homomer.

It carries out the reaction GTP + H2O = 7,8-dihydroneopterin 3'-triphosphate + formate + H(+). Its pathway is cofactor biosynthesis; 7,8-dihydroneopterin triphosphate biosynthesis; 7,8-dihydroneopterin triphosphate from GTP: step 1/1. This chain is GTP cyclohydrolase 1, found in Mycolicibacterium gilvum (strain PYR-GCK) (Mycobacterium gilvum (strain PYR-GCK)).